The following is a 332-amino-acid chain: Phosphatidylglycerol--prolipoprotein diacylglyceryl transferase (332 aa).

The next 3 helical transmembrane spans lie at 18–38 (FPYF…AYIL), 66–86 (FFTW…TMVY), and 111–131 (VGLR…GGGL). Arg-159 contributes to the a 1,2-diacyl-sn-glycero-3-phospho-(1'-sn-glycerol) binding site. The next 2 membrane-spanning stretches (helical) occupy residues 249 to 269 (GFLV…IEYF) and 302 to 322 (ILCV…SAYH).

This sequence belongs to the Lgt family.

It localises to the cell inner membrane. It carries out the reaction L-cysteinyl-[prolipoprotein] + a 1,2-diacyl-sn-glycero-3-phospho-(1'-sn-glycerol) = an S-1,2-diacyl-sn-glyceryl-L-cysteinyl-[prolipoprotein] + sn-glycerol 1-phosphate + H(+). The protein operates within protein modification; lipoprotein biosynthesis (diacylglyceryl transfer). In terms of biological role, catalyzes the transfer of the diacylglyceryl group from phosphatidylglycerol to the sulfhydryl group of the N-terminal cysteine of a prolipoprotein, the first step in the formation of mature lipoproteins. The sequence is that of Phosphatidylglycerol--prolipoprotein diacylglyceryl transferase from Treponema pallidum (strain Nichols).